Reading from the N-terminus, the 567-residue chain is Oxygen-dependent choline dehydrogenase (567 aa).

4 to 33 (DYIIIGAGSAGNVLAARLTEDADVTVLLLE) serves as a coordination point for FAD. Catalysis depends on His-473, which acts as the Proton acceptor.

It belongs to the GMC oxidoreductase family. FAD is required as a cofactor.

It catalyses the reaction choline + A = betaine aldehyde + AH2. The enzyme catalyses betaine aldehyde + NAD(+) + H2O = glycine betaine + NADH + 2 H(+). It participates in amine and polyamine biosynthesis; betaine biosynthesis via choline pathway; betaine aldehyde from choline (cytochrome c reductase route): step 1/1. Involved in the biosynthesis of the osmoprotectant glycine betaine. Catalyzes the oxidation of choline to betaine aldehyde and betaine aldehyde to glycine betaine at the same rate. The sequence is that of Oxygen-dependent choline dehydrogenase from Yersinia pseudotuberculosis serotype O:1b (strain IP 31758).